Here is a 139-residue protein sequence, read N- to C-terminus: Actin-depolymerizing factor 3 (139 aa).

Positions 5 to 139 (ASGMAVHDDC…DLDVFKSRAN (135 aa)) constitute an ADF-H domain. Residue Ser6 is modified to Phosphoserine.

The protein belongs to the actin-binding proteins ADF family.

Its subcellular location is the cytoplasm. It localises to the cytoskeleton. Functionally, actin-depolymerizing protein. Severs actin filaments (F-actin) and binds to actin monomers. In Arabidopsis thaliana (Mouse-ear cress), this protein is Actin-depolymerizing factor 3 (ADF3).